A 444-amino-acid chain; its full sequence is Methylenetetrahydrofolate--tRNA-(uracil-5-)-methyltransferase TrmFO (444 aa).

11-16 (GGGLAG) is a binding site for FAD.

Belongs to the MnmG family. TrmFO subfamily. FAD serves as cofactor.

Its subcellular location is the cytoplasm. It catalyses the reaction uridine(54) in tRNA + (6R)-5,10-methylene-5,6,7,8-tetrahydrofolate + NADH + H(+) = 5-methyluridine(54) in tRNA + (6S)-5,6,7,8-tetrahydrofolate + NAD(+). It carries out the reaction uridine(54) in tRNA + (6R)-5,10-methylene-5,6,7,8-tetrahydrofolate + NADPH + H(+) = 5-methyluridine(54) in tRNA + (6S)-5,6,7,8-tetrahydrofolate + NADP(+). Catalyzes the folate-dependent formation of 5-methyl-uridine at position 54 (M-5-U54) in all tRNAs. The protein is Methylenetetrahydrofolate--tRNA-(uracil-5-)-methyltransferase TrmFO of Desulfotalea psychrophila (strain LSv54 / DSM 12343).